The following is a 249-amino-acid chain: Probable transcriptional regulatory protein Csal_1845 (249 aa).

The protein belongs to the TACO1 family.

It is found in the cytoplasm. The polypeptide is Probable transcriptional regulatory protein Csal_1845 (Chromohalobacter salexigens (strain ATCC BAA-138 / DSM 3043 / CIP 106854 / NCIMB 13768 / 1H11)).